The following is a 265-amino-acid chain: Glutamate racemase (265 aa).

Substrate is bound by residues 7–8 and 39–40; these read DS and YG. The active-site Proton donor/acceptor is the cysteine 71. Residue 72–73 coordinates substrate; it reads NT. Residue cysteine 184 is the Proton donor/acceptor of the active site. 185–186 serves as a coordination point for substrate; it reads TH.

This sequence belongs to the aspartate/glutamate racemases family.

The catalysed reaction is L-glutamate = D-glutamate. The protein operates within cell wall biogenesis; peptidoglycan biosynthesis. Provides the (R)-glutamate required for cell wall biosynthesis. This chain is Glutamate racemase, found in Sulfurovum sp. (strain NBC37-1).